The primary structure comprises 205 residues: Mediator of RNA polymerase II transcription subunit 29 (205 aa).

A compositionally biased stretch (low complexity) spans 1–27 (MNPNMNMMQMSGPPMMQVSPMMQSSPQ). The interval 1 to 65 (MNPNMNMMQM…QQQQQQAEKL (65 aa)) is disordered. The segment covering 28–38 (PMMPTGPPGPV) has biased composition (pro residues). A compositionally biased stretch (low complexity) spans 39–61 (PMQQQHQQQQQQQQQQQQQQQQQ).

Belongs to the Mediator complex subunit 29 family. Component of the Mediator complex.

The protein localises to the nucleus. In terms of biological role, component of the Mediator complex, a coactivator involved in the regulated transcription of nearly all RNA polymerase II-dependent genes. Mediator functions as a bridge to convey information from gene-specific regulatory proteins to the basal RNA polymerase II transcription machinery. Mediator is recruited to promoters by direct interactions with regulatory proteins and serves as a scaffold for the assembly of a functional preinitiation complex with RNA polymerase II and the general transcription factors. The polypeptide is Mediator of RNA polymerase II transcription subunit 29 (ix) (Drosophila virilis (Fruit fly)).